A 1094-amino-acid polypeptide reads, in one-letter code: Probable serine/threonine-protein kinase kinX (1094 aa).

Residues 22–281 (LDFISEIGSG…QTLKQIKTTL (260 aa)) form the Protein kinase domain. ATP contacts are provided by residues 28-36 (IGSGGFGKV) and K49. D146 (proton acceptor) is an active-site residue. Disordered stretches follow at residues 301–884 (TTNG…SVED) and 946–1083 (IKVE…PNNK). Residues 330–344 (YDDDDDDDDDDDDND) show a composition bias toward acidic residues. Over residues 351 to 373 (SDNSNSNVTLESNSNYNSSTING) the composition is skewed to polar residues. Positions 374–387 (QEQQEQQEQQQQQQ) are enriched in low complexity. Over residues 393 to 408 (DEGEIEQDDDNIEVYD) the composition is skewed to acidic residues. Over residues 410 to 424 (DYQKKLEEHQKELLE) the composition is skewed to basic and acidic residues. Acidic residues-rich tracts occupy residues 433 to 454 (STDE…EEEQ), 480 to 496 (DDED…EGDE), and 503 to 523 (DFDE…DEDE). Low complexity-rich tracts occupy residues 526–542 (IQYY…LQKQ) and 564–585 (RQLQ…QHQQ). Residues 587-602 (YDDDDDDDDEEEEEYD) show a composition bias toward acidic residues. Residues 603–639 (DVIRHDTDSEEESKDKTPLPWDQHFEKQKESENKVEQ) are compositionally biased toward basic and acidic residues. The span at 650-661 (QETEQQQQQQQQ) shows a compositional bias: low complexity. The segment covering 670-801 (PTKVEDVKVE…EPVEEVKVEE (132 aa)) has biased composition (basic and acidic residues). The interval 676 to 978 (VKVETEEQTK…PVKVEVASPV (303 aa)) is 40 X 9 AA approximate repeats of V-K-V-E-E-P-V-E-E. The segment covering 802–816 (PVEEVEAEESVQEPV) has biased composition (acidic residues). Basic and acidic residues-rich tracts occupy residues 817-884 (EEVK…SVED) and 946-971 (IKVE…EPVK). 2 stretches are compositionally biased toward low complexity: residues 972–985 (VEVA…QPPQ) and 992–1011 (VVST…SNSP). Over residues 1016 to 1031 (VKQPQQQEIEVNSTPI) the composition is skewed to polar residues. Positions 1032 to 1050 (KQQQQQQQTPTQQTQTPTK) are enriched in low complexity.

This sequence belongs to the protein kinase superfamily. TKL Ser/Thr protein kinase family.

It carries out the reaction L-seryl-[protein] + ATP = O-phospho-L-seryl-[protein] + ADP + H(+). It catalyses the reaction L-threonyl-[protein] + ATP = O-phospho-L-threonyl-[protein] + ADP + H(+). The protein is Probable serine/threonine-protein kinase kinX (kinX) of Dictyostelium discoideum (Social amoeba).